We begin with the raw amino-acid sequence, 846 residues long: Structure-specific endonuclease subunit SLX4 (846 aa).

7 disordered regions span residues 1–20, 84–111, 123–164, 283–322, 480–513, 624–690, and 723–751; these read MTDHGPDALDAFSPPRVGSA, KAGAENLPVHRTKRRKLGNQRDNTAESM, QPAE…VKKA, RTSKSLDSESLDTGTSSTSEGNGKRKQTKKAKRSAKSKIT, DPTPKITPKPGDERQSNLSNKNTERNIPEESSLL, PPNA…MGSQ, and TLASRSASSHITPQISSAPSQTVPIQTRA. Over residues 141-153 the composition is skewed to basic and acidic residues; sequence KPSEKGQKSEKTA. Over residues 293–303 the composition is skewed to polar residues; it reads LDTGTSSTSEG. The span at 306–318 shows a compositional bias: basic residues; that stretch reads KRKQTKKAKRSAK. Polar residues-rich tracts occupy residues 657–680 and 725–751; these read KEITNPARSSWSTAKNLKSSSKPT and ASRSASSHITPQISSAPSQTVPIQTRA.

This sequence belongs to the SLX4 family. As to quaternary structure, forms a heterodimer with SLX1. Phosphorylated in response to DNA damage.

It is found in the nucleus. Regulatory subunit of the SLX1-SLX4 structure-specific endonuclease that resolves DNA secondary structures generated during DNA repair and recombination. Has endonuclease activity towards branched DNA substrates, introducing single-strand cuts in duplex DNA close to junctions with ss-DNA. This chain is Structure-specific endonuclease subunit SLX4, found in Arthroderma otae (strain ATCC MYA-4605 / CBS 113480) (Microsporum canis).